Reading from the N-terminus, the 221-residue chain is Coiled-coil domain-containing protein 70 (221 aa).

Residues 129 to 168 (NALWEKDRNLLQEDKALWEEEKALWVEERALLEEEKALWE) adopt a coiled-coil conformation.

The polypeptide is Coiled-coil domain-containing protein 70 (CCDC70) (Macaca fascicularis (Crab-eating macaque)).